The chain runs to 358 residues: MTTTIRSGRLSGWESFCNWVTSTNNRIYVGWFGVLMVPTLLAAAICFTIAFIAAPPVDIDGIREPVAGSFLYGNNIISGAVVPSSNAIGLHFYPIWEAASVDEWLYNGGPYQLVVFHFLIGICCWLGRQWELSYRLGMRPWICVAYSAPLSAAFAVFLIYPVGQGSFSDGMPLGISGTFNFMLVFQAEHNILMHPFHMIGVAGMFGGSLFSAMHGSLVTSSLIRETTETESQNYGYKFGQEEETYNIVAAHGYFGRLIFQYASFNNSRSLHFFLAAWPVICIWITSLGISTMAFNLNGFNFNQSVLDAQGRVVPTWADVLNRSNLGMEVMHERNAHNFPLDLAAAESTPVALIAPAIG.

The next 3 helical transmembrane spans lie at 28-45 (YVGW…AAAI), 117-132 (HFLI…QWEL), and 141-155 (WICV…AAFA). Residue histidine 117 coordinates chlorophyll a. Pheophytin a is bound at residue tryptophan 125. [CaMn4O5] cluster contacts are provided by aspartate 169 and glutamate 188. A helical transmembrane segment spans residues 196–217 (FHMIGVAGMFGGSLFSAMHGSL). Histidine 197 serves as a coordination point for chlorophyll a. A quinone-binding positions include histidine 214 and 263–264 (SF). Histidine 214 contributes to the Fe cation binding site. Fe cation is bound at residue histidine 271. A helical transmembrane segment spans residues 273–287 (FLAAWPVICIWITSL). Histidine 331, glutamate 332, aspartate 341, and alanine 343 together coordinate [CaMn4O5] cluster. Positions 344–358 (AAESTPVALIAPAIG) are excised as a propeptide.

It belongs to the reaction center PufL/M/PsbA/D family. As to quaternary structure, PSII is composed of 1 copy each of membrane proteins PsbA, PsbB, PsbC, PsbD, PsbE, PsbF, PsbH, PsbI, PsbJ, PsbK, PsbL, PsbM, PsbT, PsbX, PsbY, Psb30/Ycf12, peripheral proteins PsbO, CyanoQ (PsbQ), PsbU, PsbV and a large number of cofactors. It forms dimeric complexes. It depends on The D1/D2 heterodimer binds P680, chlorophylls that are the primary electron donor of PSII, and subsequent electron acceptors. It shares a non-heme iron and each subunit binds pheophytin, quinone, additional chlorophylls, carotenoids and lipids. D1 provides most of the ligands for the Mn4-Ca-O5 cluster of the oxygen-evolving complex (OEC). There is also a Cl(-1) ion associated with D1 and D2, which is required for oxygen evolution. The PSII complex binds additional chlorophylls, carotenoids and specific lipids. as a cofactor. Tyr-160 forms a radical intermediate that is referred to as redox-active TyrZ, YZ or Y-Z. In terms of processing, C-terminally processed by CtpA; processing is essential to allow assembly of the oxygen-evolving complex and thus photosynthetic growth.

It is found in the cellular thylakoid membrane. It catalyses the reaction 2 a plastoquinone + 4 hnu + 2 H2O = 2 a plastoquinol + O2. Functionally, photosystem II (PSII) is a light-driven water:plastoquinone oxidoreductase that uses light energy to abstract electrons from H(2)O, generating O(2) and a proton gradient subsequently used for ATP formation. It consists of a core antenna complex that captures photons, and an electron transfer chain that converts photonic excitation into a charge separation. The D1/D2 (PsbA/PsbD) reaction center heterodimer binds P680, the primary electron donor of PSII as well as several subsequent electron acceptors. The sequence is that of Photosystem II protein D1 from Prochlorococcus marinus (strain MIT 9313).